A 188-amino-acid polypeptide reads, in one-letter code: Xanthine phosphoribosyltransferase (188 aa).

Xanthine contacts are provided by leucine 20 and asparagine 27. Position 127–131 (127–131 (AHGEA)) interacts with 5-phospho-alpha-D-ribose 1-diphosphate. Lysine 155 lines the xanthine pocket.

The protein belongs to the purine/pyrimidine phosphoribosyltransferase family. Xpt subfamily. As to quaternary structure, homodimer.

It localises to the cytoplasm. The catalysed reaction is XMP + diphosphate = xanthine + 5-phospho-alpha-D-ribose 1-diphosphate. It functions in the pathway purine metabolism; XMP biosynthesis via salvage pathway; XMP from xanthine: step 1/1. Its function is as follows. Converts the preformed base xanthine, a product of nucleic acid breakdown, to xanthosine 5'-monophosphate (XMP), so it can be reused for RNA or DNA synthesis. In Heliobacterium modesticaldum (strain ATCC 51547 / Ice1), this protein is Xanthine phosphoribosyltransferase.